The primary structure comprises 920 residues: Anoctamin-4 (920 aa).

At 1–323 the chain is on the cytoplasmic side; sequence METSSSGITN…LYFAWLGWYT (323 aa). Residues 38–64 are disordered; that stretch reads KDDDSLLHPGNLTSTSDDASRLEAGGE. The chain crosses the membrane as a helical span at residues 324-344; the sequence is GMLFPAAFIGLFVFLYGVITL. Topologically, residues 345-389 are extracellular; that stretch reads DHCQVSKEVCQATDIIMCPVCDKYCPFMRLSDSCVYAKVTHLFDN. The helical transmembrane segment at 390–410 threads the bilayer; sequence GATVFFAVFMAVWATVFLEFW. The Cytoplasmic portion of the chain corresponds to 411 to 470; the sequence is KRRRAVIAYDWDLIDWEEEEEEIRPQFEAKYSKKERMNPISGKPEPYQAFADKCSRLIVS. The chain crosses the membrane as a helical span at residues 471-491; that stretch reads ASGIFFMICVVIAAVFGIVIY. The Extracellular segment spans residues 492–512; that stretch reads RVVTVSTFAAFKWALIRNNSQ. N-linked (GlcNAc...) asparagine glycosylation occurs at N509. Residues 513–533 form a helical membrane-spanning segment; that stretch reads VATTGTAVCINFCIIMLLNVL. The Cytoplasmic segment spans residues 534 to 560; that stretch reads YEKVALLLTNLEQPRTESEWENSFTLK. Residues 561-581 traverse the membrane as a helical segment; it reads MFLFQFVNLNSSTFYIAFFLG. Over 582–680 the chain is Extracellular; that stretch reads RFTGHPGAYL…AYGLFDEYLE (99 aa). The helical transmembrane segment at 681–701 threads the bilayer; the sequence is MILQFGFTTIFVAAFPLAPLL. The Cytoplasmic segment spans residues 702–733; sequence ALLNNIIEIRLDAYKFVTQWRRPLASRAKDIG. Residues 734 to 754 form a helical membrane-spanning segment; the sequence is IWYGILEGIGILSVITNAFVI. At 755–850 the chain is on the extracellular side; that stretch reads AITSDFIPRL…QFWHVLAARL (96 aa). Residues N789 and N802 are each glycosylated (N-linked (GlcNAc...) asparagine). The helical transmembrane segment at 851–871 threads the bilayer; sequence AFIIVFEHLVFCIKHLISYLI. Residues 872–920 are Cytoplasmic-facing; sequence PDLPKDLRDRMRREKYLIQEMMYEAELERLQKERKERKKNGKAHHNEWP.

The protein belongs to the anoctamin family.

Its subcellular location is the cell membrane. The enzyme catalyses a 1,2-diacyl-sn-glycero-3-phospho-L-serine(in) = a 1,2-diacyl-sn-glycero-3-phospho-L-serine(out). It catalyses the reaction a beta-D-galactosyl-(1&lt;-&gt;1')-N-acylsphing-4-enine(out) = a beta-D-galactosyl-(1&lt;-&gt;1')-N-acylsphing-4-enine(in). The catalysed reaction is a 1,2-diacyl-sn-glycero-3-phosphocholine(in) = a 1,2-diacyl-sn-glycero-3-phosphocholine(out). In terms of biological role, has calcium-dependent phospholipid scramblase activity; scrambles phosphatidylserine, phosphatidylcholine and galactosylceramide. Does not exhibit calcium-activated chloride channel (CaCC) activity. The chain is Anoctamin-4 from Bos taurus (Bovine).